Consider the following 108-residue polypeptide: Large ribosomal subunit protein P2A (108 aa).

The disordered stretch occupies residues Leu-62–Asp-108. Residues Gly-68–Glu-84 show a composition bias toward low complexity. The span at Ala-85 to Met-102 shows a compositional bias: acidic residues. Phosphoserine is present on Ser-98.

It belongs to the eukaryotic ribosomal protein P1/P2 family.

Its function is as follows. Plays an important role in the elongation step of protein synthesis. In Candida albicans (Yeast), this protein is Large ribosomal subunit protein P2A (RPP2A).